The primary structure comprises 197 residues: MKFAVFASLLASAAAFAPAQQSARTSVATNMAFESELGAQPPLGFFDPLGLVADGDQEKFDRLRYVELKHGRISMLAVVGYLVQENGIRLPGDIDYSGTSFASIPNGFAALSTISTAGIAQIVAFIGFLEIAVMKDITGGEFPGDFRNDYIDFGWDSFDEETQFKKRAIELNQGRAAQMGILALMVHEKLGVSLIPN.

The N-terminal 31 residues, 1-31 (MKFAVFASLLASAAAFAPAQQSARTSVATNM), are a transit peptide targeting the chloroplast. Helical transmembrane passes span 73–94 (ISML…PGDI), 114–134 (ISTA…IAVM), and 174–196 (GRAA…SLIP).

Belongs to the fucoxanthin chlorophyll protein family. The LHC complex of chromophytic algae is composed of fucoxanthin, chlorophyll A and C bound non-covalently by fucoxanthin chlorophyll proteins (FCPs). The ratio of the pigments in lhc; fucoxanthin: chlorophyll C: chlorophyll A is (0.6-1): (0.1-0.3): (1).

It localises to the plastid. The protein localises to the chloroplast thylakoid membrane. In terms of biological role, the light-harvesting complex (LHC) functions as a light receptor, it captures and delivers excitation energy to photosystems with which it is closely associated. In chromophytic algae, LHC is associated with photosystem II, energy being transferred from fucoxanthin and chlorophyll C to chlorophyll A and the photosynthetic reaction centers where it is used to synthesize ATP and reducing power. The protein is Fucoxanthin-chlorophyll a-c binding protein F, chloroplastic (FCPF) of Phaeodactylum tricornutum (Diatom).